A 61-amino-acid chain; its full sequence is UPF0434 protein PFL_1779 (61 aa).

The protein belongs to the UPF0434 family.

The polypeptide is UPF0434 protein PFL_1779 (Pseudomonas fluorescens (strain ATCC BAA-477 / NRRL B-23932 / Pf-5)).